A 301-amino-acid polypeptide reads, in one-letter code: NTE family protein RssA (301 aa).

The PNPLA domain maps to 8-168 (LALGSGAARG…VNPIPISLTR (161 aa)). The GXSXG signature appears at 39-43 (GCSIG). The Nucleophile role is filled by serine 41. The Proton acceptor role is filled by aspartate 155. The short motif at 155–157 (DGA) is the DGA/G element.

Belongs to the NTE family.

This is NTE family protein RssA (rssA) from Escherichia coli (strain K12).